The chain runs to 802 residues: DNA mismatch repair protein MutS (802 aa).

617-624 contributes to the ATP binding site; that stretch reads GPNMGGKS.

It belongs to the DNA mismatch repair MutS family.

Its function is as follows. This protein is involved in the repair of mismatches in DNA. It is possible that it carries out the mismatch recognition step. This protein has a weak ATPase activity. This Buchnera aphidicola subsp. Acyrthosiphon pisum (strain 5A) protein is DNA mismatch repair protein MutS.